A 180-amino-acid polypeptide reads, in one-letter code: Calcineurin subunit B type 1 (180 aa).

Gly2 carries the N-myristoyl glycine lipid modification. EF-hand domains follow at residues 25–60 (AELKKLYRRFQMLDKDGSGTLTTDEFLSIPDLALNP), 62–92 (LERVIQIFDQNKDNEIEFFEFVGTLATLSHK), 94–129 (TKEDKLKFLFQIYDIDCDGFISNGELFQVLKMMVGT), and 135–170 (QLQQIVDKTIIEGDYDKDGKISFDEFIHMIGNQEGI). The Ca(2+) site is built by Asp38, Asp40, Ser42, Thr44, Glu49, Asp70, Asn72, Asp74, Glu76, Glu81, Asp107, Asp109, Asp111, and Glu118. A canA/calcineurin A binding region spans residues 138–143 (QIVDKT). Residues Asp148, Asp150, Asp152, Lys154, and Glu159 each contribute to the Ca(2+) site.

This sequence belongs to the calcineurin regulatory subunit family. Forms a complex composed of a calmodulin-dependent catalytic subunit canA (also known as calcineurin A) and a regulatory Ca(2+)-binding subunit cnbA (also known as calcineurin B).

Regulatory subunit of calcineurin, a calcium-dependent, calmodulin stimulated protein phosphatase. Confers calcium sensitivity. Important for stalk formation. This Dictyostelium discoideum (Social amoeba) protein is Calcineurin subunit B type 1 (cnbA).